Consider the following 99-residue polypeptide: Large ribosomal subunit protein eL30 (99 aa).

It belongs to the eukaryotic ribosomal protein eL30 family.

The protein is Large ribosomal subunit protein eL30 (rpl30e) of Pyrococcus horikoshii (strain ATCC 700860 / DSM 12428 / JCM 9974 / NBRC 100139 / OT-3).